A 224-amino-acid chain; its full sequence is MARYFILAAALLLTACSSTSKKPIADDPFYAPVYPEAPPTKIAATGSIYQDSQAASLYSDIRAHKVGDIITIVLKEATQAKKSAGNQIKKGSDLSLDPIYAGGSNVSIGGVPLDLRYKDSMNTKRESDADQSNSLDGSISANVMQVLNNGNLVVRGEKWISINNGDEFIRVTGIVRSQDIKPDNTIDSTRMANARIQYSGTGTFADAQKVGWLSQFFMSDWWPF.

The signal sequence occupies residues 1-15 (MARYFILAAALLLTA). Cys16 carries the N-palmitoyl cysteine lipid modification. Cys16 carries S-diacylglycerol cysteine lipidation.

Belongs to the FlgH family. In terms of assembly, the basal body constitutes a major portion of the flagellar organelle and consists of four rings (L,P,S, and M) mounted on a central rod.

Its subcellular location is the cell outer membrane. The protein localises to the bacterial flagellum basal body. Its function is as follows. Assembles around the rod to form the L-ring and probably protects the motor/basal body from shearing forces during rotation. In Shewanella sp. (strain MR-4), this protein is Flagellar L-ring protein.